A 357-amino-acid chain; its full sequence is Non-structural protein NS2 (357 aa).

2 disordered regions span residues Pro169–Lys191 and Asp229–Thr266. The span at Glu233–Ser249 shows a compositional bias: basic and acidic residues. A compositionally biased stretch (acidic residues) spans Asp250–Asp260.

This sequence belongs to the orbivirus non-structural protein NS2 family.

Its function is as follows. Single-stranded RNA-binding protein. The polypeptide is Non-structural protein NS2 (Segment-8) (Antilocapra americana (Pronghorn)).